We begin with the raw amino-acid sequence, 167 residues long: Translationally-controlled tumor protein homolog (167 aa).

The 167-residue stretch at 1-167 folds into the TCTP domain; sequence MIIFKDVISN…WKHGIKEEKI (167 aa).

The protein belongs to the TCTP family.

It localises to the cytoplasm. It is found in the cytoskeleton. Involved in protein synthesis. Involved in microtubule stabilization. This is Translationally-controlled tumor protein homolog from Yarrowia lipolytica (strain CLIB 122 / E 150) (Yeast).